The sequence spans 112 residues: UPF0342 protein SPH_1504 (112 aa).

This sequence belongs to the UPF0342 family.

In Streptococcus pneumoniae (strain Hungary19A-6), this protein is UPF0342 protein SPH_1504.